Here is a 235-residue protein sequence, read N- to C-terminus: tRNA pseudouridine synthase B (235 aa).

Asp48 (nucleophile) is an active-site residue.

The protein belongs to the pseudouridine synthase TruB family. Type 1 subfamily.

It catalyses the reaction uridine(55) in tRNA = pseudouridine(55) in tRNA. Its function is as follows. Responsible for synthesis of pseudouridine from uracil-55 in the psi GC loop of transfer RNAs. This chain is tRNA pseudouridine synthase B, found in Parabacteroides distasonis (strain ATCC 8503 / DSM 20701 / CIP 104284 / JCM 5825 / NCTC 11152).